Consider the following 352-residue polypeptide: C-C chemokine receptor type 5 (352 aa).

Over 1-30 (MDYQVSSPTYDIDYYTSEPCQKIKVKQIAA) the chain is Extracellular. The residue at position 3 (Y3) is a Sulfotyrosine. 2 O-linked (GalNAc...) serine glycosylation sites follow: S6 and S7. Residues Y10, Y14, and Y15 each carry the sulfotyrosine modification. Disulfide bonds link C20–C269 and C101–C178. A helical membrane pass occupies residues 31–58 (RLLPPLYSLVFIFGFVGNILVVLILINC). Residues 59–68 (KRLKSMTDIY) lie on the Cytoplasmic side of the membrane. The helical transmembrane segment at 69–89 (LLNLAISDLLFLLTVPFWAHY) threads the bilayer. The Extracellular portion of the chain corresponds to 90–102 (AAAQWDFGNTMCQ). Residues 103–124 (LLTGLYFIGFFSGIFFIILLTI) traverse the membrane as a helical segment. The Cytoplasmic portion of the chain corresponds to 125–141 (DRYLAIVHAVFALKART). The chain crosses the membrane as a helical span at residues 142–166 (VTFGVVTSVITWVVAVFASLPRIIF). Topologically, residues 167-198 (TRSQREGLHYTCSSHFPYSQYQFWKNFQTLKI) are extracellular. A helical membrane pass occupies residues 199–218 (VILGLVLPLLVMVICYSGIL). Topologically, residues 219–235 (KTLLRCRNDKKRHRAVR) are cytoplasmic. The chain crosses the membrane as a helical span at residues 236–260 (LIFTIMIVYFLFWAPYNIVLLLNTF). The Extracellular segment spans residues 261–277 (QEFFGLNNCSSSNRLDQ). A helical transmembrane segment spans residues 278-301 (AMQVTETLGMTHCCINPIIYAFVG). The Cytoplasmic segment spans residues 302-352 (EKFRNYLLVFFQKHIAKRFCKCCSIFQQDAPERASSVYTRSTGEQETSVGL). Residues C321, C323, and C324 are each lipidated (S-palmitoyl cysteine). S336, S337, S342, and S349 each carry phosphoserine; by BARK1.

The protein belongs to the G-protein coupled receptor 1 family. Interacts with PRAF2. Efficient ligand binding to CCL3/MIP-1alpha and CCL4/MIP-1beta requires sulfation, O-glycosylation and sialic acid modifications. Glycosylation on Ser-6 is required for efficient binding of CCL4. Interacts with GRK2. Interacts with ARRB1 and ARRB2. Interacts with CNIH4. Interacts with S100A4; this interaction stimulates T-lymphocyte chemotaxis. Post-translationally, sulfated on at least 2 of the N-terminal tyrosines. Sulfation is required for efficient binding of the chemokines, CCL3 and CCL4. Palmitoylation in the C-terminal is important for cell surface expression. In terms of processing, phosphorylation on serine residues in the C-terminal is stimulated by binding CC chemokines especially by APO-RANTES. Post-translationally, O-glycosylated, but not N-glycosylated. Ser-6 appears to be the major site even if Ser-7 may be also O-glycosylated. Also sialylated glycans present which contribute to chemokine binding. Thr-16 and Ser-17 may also be glycosylated and, if so, with small moieties such as a T-antigen.

The protein localises to the cell membrane. Its function is as follows. Receptor for a number of inflammatory CC-chemokines including CCL3/MIP-1-alpha, CCL4/MIP-1-beta and RANTES and subsequently transduces a signal by increasing the intracellular calcium ion level. May play a role in the control of granulocytic lineage proliferation or differentiation. Participates in T-lymphocyte migration to the infection site by acting as a chemotactic receptor. The protein is C-C chemokine receptor type 5 (CCR5) of Chlorocebus sabaeus (Green monkey).